Here is a 186-residue protein sequence, read N- to C-terminus: Elongation factor P (186 aa).

The protein belongs to the elongation factor P family.

Its subcellular location is the cytoplasm. Its pathway is protein biosynthesis; polypeptide chain elongation. Functionally, involved in peptide bond synthesis. Stimulates efficient translation and peptide-bond synthesis on native or reconstituted 70S ribosomes in vitro. Probably functions indirectly by altering the affinity of the ribosome for aminoacyl-tRNA, thus increasing their reactivity as acceptors for peptidyl transferase. In Acidobacterium capsulatum (strain ATCC 51196 / DSM 11244 / BCRC 80197 / JCM 7670 / NBRC 15755 / NCIMB 13165 / 161), this protein is Elongation factor P.